Reading from the N-terminus, the 248-residue chain is 3-oxoacyl-[acyl-carrier-protein] reductase FabG (248 aa).

Residues G14–R17, T39, N65–L66, and N92 each bind NADP(+). S144 lines the substrate pocket. Y157 acts as the Proton acceptor in catalysis. Residues Y157–K161 and I190 each bind NADP(+).

The protein belongs to the short-chain dehydrogenases/reductases (SDR) family. Homotetramer.

The enzyme catalyses a (3R)-hydroxyacyl-[ACP] + NADP(+) = a 3-oxoacyl-[ACP] + NADPH + H(+). It participates in lipid metabolism; fatty acid biosynthesis. Catalyzes the NADPH-dependent reduction of beta-ketoacyl-ACP substrates to beta-hydroxyacyl-ACP products, the first reductive step in the elongation cycle of fatty acid biosynthesis. This chain is 3-oxoacyl-[acyl-carrier-protein] reductase FabG (fabG), found in Aquifex aeolicus (strain VF5).